The sequence spans 221 residues: Urease accessory protein UreG (221 aa).

19–26 provides a ligand contact to GTP; that stretch reads GPVGSGKT.

Belongs to the SIMIBI class G3E GTPase family. UreG subfamily. Homodimer. UreD, UreF and UreG form a complex that acts as a GTP-hydrolysis-dependent molecular chaperone, activating the urease apoprotein by helping to assemble the nickel containing metallocenter of UreC. The UreE protein probably delivers the nickel.

It localises to the cytoplasm. Facilitates the functional incorporation of the urease nickel metallocenter. This process requires GTP hydrolysis, probably effectuated by UreG. In terms of biological role, expression of the urease operon increases the likelihood of bacterial survival by contributing to acid resistance in vitro and in vivo in BALB/c mice. Y.enterocolitica enters the body via an oral path and must survive the acidic stomach before being able to colonize the intestinal mucosa. The chain is Urease accessory protein UreG from Yersinia enterocolitica.